Here is a 1139-residue protein sequence, read N- to C-terminus: Autophagy-related protein 23 (1139 aa).

Disordered regions lie at residues 1–148, 225–327, 356–388, 475–569, 648–674, 720–767, 786–828, 935–961, and 977–1012; these read MFQR…EMSP, STDK…YDDE, LTTARETSTGLVESLENATRELSKTRDVASVKD, KNEK…DTAG, KKISSSTSDAEASSKMQSEMESIKTEY, RQES…RETE, EDAQ…SKLR, AAVEERDRIEDESATLARRKTRETEDL, and HERDELEQREKEWRKRREELESVEEKAEAETDELRT. The span at 7 to 18 shows a compositional bias: basic and acidic residues; it reads SAIDRTIAEEQA. A compositionally biased stretch (low complexity) spans 19–37; that stretch reads RQQTATQSRSPSRTGSTSS. Coiled coils occupy residues 142–170 and 215–259; these read KLQEMSPEIRQKLRKLEKLEATYPELLRS and DMVM…STDQ. Composition is skewed to basic and acidic residues over residues 225 to 247, 261 to 273, 373 to 385, and 475 to 494; these read STDKDELQKKYNEAEEKAKKLEE, KTSDSETSKDAQD, ATRELSKTRDVAS, and KNEKSDSQTKITDLTKKLES. Positions 323-495 form a coiled coil; the sequence is SYDDEIPQLQ…TDLTKKLESK (173 aa). Low complexity predominate over residues 496 to 522; that stretch reads PAPAMLTPAATPMPTVLQPAATSATAA. Residues 526–537 are compositionally biased toward basic residues; that stretch reads GKKKNNKKKKGK. Residues 566–1067 adopt a coiled-coil conformation; it reads DTAGNAELKA…AAQTKLVASS (502 aa). Over residues 651–661 the composition is skewed to low complexity; sequence SSSTSDAEASS. Composition is skewed to basic and acidic residues over residues 728–767, 786–815, 935–945, and 977–1011; these read ATKEELANKTKELRDMEKREKDLKRDVERAQKISSDRETE, EDAQRVSGRDLRRSEAEKVEISGRADKAEQ, AAVEERDRIED, and HERDELEQREKEWRKRREELESVEEKAEAETDELR. The 51-residue stretch at 1082–1132 folds into the GRIP domain; the sequence is SPAGAPDTVYLKTILLQFLEQKDTKLRAQLVPVLGKLLRFDKTDEQKWQKA.

The protein belongs to the ATG23 family. Forms a complex with ATG9 and ATG27.

It is found in the cytoplasm. It localises to the preautophagosomal structure membrane. Functionally, required for cytoplasm to vacuole transport (Cvt) vesicle formation and efficient autophagy. Plays a role in ATG protein retrieval from the pre-autophagosomal structure (PAS) and is especially required for autophagy-dependent cycling of ATG9. Autophagy is required for proper vegetative growth, asexual/sexual reproduction, and full virulence. Autophagy is particularly involved in the biosynthesis of deoxynivalenol (DON), an important virulence determinant. This chain is Autophagy-related protein 23, found in Gibberella zeae (strain ATCC MYA-4620 / CBS 123657 / FGSC 9075 / NRRL 31084 / PH-1) (Wheat head blight fungus).